The chain runs to 129 residues: MSATEEILEKLKSLTLLEAADLVKQIEETFGVSAAPAAGVMMAAPGAGGAAGGEEAEEKTEFDVVLEEVPSDKKIAVLKVVRTLTGLGLKEAKEMVESTPKSIKEGVSKEDAEEAKKSLEDAGGKASLK.

The span at 95–123 (MVESTPKSIKEGVSKEDAEEAKKSLEDAG) shows a compositional bias: basic and acidic residues. The tract at residues 95–129 (MVESTPKSIKEGVSKEDAEEAKKSLEDAGGKASLK) is disordered.

It belongs to the bacterial ribosomal protein bL12 family. As to quaternary structure, homodimer. Part of the ribosomal stalk of the 50S ribosomal subunit. Forms a multimeric L10(L12)X complex, where L10 forms an elongated spine to which 2 to 4 L12 dimers bind in a sequential fashion. Binds GTP-bound translation factors.

Functionally, forms part of the ribosomal stalk which helps the ribosome interact with GTP-bound translation factors. Is thus essential for accurate translation. This is Large ribosomal subunit protein bL12 from Acaryochloris marina (strain MBIC 11017).